A 287-amino-acid polypeptide reads, in one-letter code: Probable glucose uptake protein GlcU (287 aa).

A run of 9 helical transmembrane segments spans residues 7–29 (LIAL…VGGG), 34–56 (IRGT…FAKF), 58–75 (NPTV…WAFG), 114–136 (WSSM…GVAL), 156–178 (MGIL…IFGV), 183–202 (ALFF…SMNH), 209–228 (TALN…FMFY), 233–255 (VGVA…GGIF), and 267–286 (TGIW…LGNL).

The protein belongs to the GRP transporter (TC 2.A.7.5) family.

It is found in the cell membrane. Its function is as follows. Involved in the uptake of glucose. The protein is Probable glucose uptake protein GlcU (glcU) of Staphylococcus aureus (strain MRSA252).